A 348-amino-acid polypeptide reads, in one-letter code: MPHIDNDVKLDFKDVLLRPKRSTLKSRSEVELTRSFSFRNSKQMYSGIPVIAANMDTVGTFEMARVLCKFSLFTAIHKHYSIHQWQEFASQNPDCLECLAASSGSGSADFEQLEQILEAIPQVKYICLDVANGYSEHFVEFVKDVRKRFPQHTIMAGNVVTGEMVEELILSGADIIKVGIGPGSVCTTRKKTGVGYPQLSAVMECADAAHGLKGHIISDGGCSCPGDVAKAFGAGADFVMLGGMLAGHSESGGELIERDGKKYKLFYGMSSEMAMKKYSGGVAEYRASEGKIVEVPFKGDVEHTIRDILGGIRSTCTYVGAAKLKELSRRTTFIRVTQQVNPIFSNSQ.

NADP(+)-binding positions include 26–27, Lys-78, 129–131, and 180–181; these read SR, DVA, and IG. 3 residues coordinate K(+): Gly-181, Gly-183, and Cys-186. The active-site Thioimidate intermediate is the Cys-186. Thr-188 acts as the Proton donor/acceptor in catalysis. Arg-189 is a K(+) binding site. GMP-binding positions include 219–221, 242–243, 268–270, and 286–290; these read DGG, GG, GMS, and RASEG. Residues Met-269 and 285-286 each bind NADP(+); that span reads YR. Lys-291 bears the N6-acetyllysine mark. 314–317 provides a ligand contact to NADP(+); sequence STCT.

The protein belongs to the IMPDH/GMPR family. GuaC type 1 subfamily. As to quaternary structure, homotetramer.

It catalyses the reaction IMP + NH4(+) + NADP(+) = GMP + NADPH + 2 H(+). Catalyzes the irreversible NADPH-dependent deamination of GMP to IMP. It functions in the conversion of nucleobase, nucleoside and nucleotide derivatives of G to A nucleotides, and in maintaining the intracellular balance of A and G nucleotides. Plays a role in modulating cellular differentiation. The sequence is that of GMP reductase 2 from Mus musculus (Mouse).